A 347-amino-acid chain; its full sequence is Haptoglobin (347 aa).

The signal sequence occupies residues 1–18; that stretch reads MRALGAVVTLLLWGQLFA. The 58-residue stretch at 31–88 folds into the Sushi domain; it reads DSCPKPPEIANGYVEHLVRYRCRQFYRLRAEGDGVYTLNDEKQWVNTVAGEKLPECEA. 4 disulfides stabilise this stretch: cysteine 52–cysteine 86, cysteine 90–cysteine 207, cysteine 250–cysteine 281, and cysteine 292–cysteine 322. One can recognise a Peptidase S1 domain in the interval 103 to 345; the sequence is IIGGSMDAKG…LKDWVQETMA (243 aa). N-linked (GlcNAc...) asparagine glycosylation is found at asparagine 148, asparagine 182, asparagine 256, and asparagine 264. An interaction with CD163 region spans residues 259–264; the sequence is VPEKKN.

The protein belongs to the peptidase S1 family. Tetramer of two alpha and two beta chains; disulfide-linked. The hemoglobin/haptoglobin complex is composed of a haptoglobin dimer bound to two hemoglobin alpha-beta dimers. Interacts with CD163. Interacts with ERGIC3. As to expression, expressed by the liver and secreted in plasma.

It localises to the secreted. Functionally, as a result of hemolysis, hemoglobin is found to accumulate in the kidney and is secreted in the urine. Haptoglobin captures, and combines with free plasma hemoglobin to allow hepatic recycling of heme iron and to prevent kidney damage. Haptoglobin also acts as an antioxidant, has antibacterial activity and plays a role in modulating many aspects of the acute phase response. Hemoglobin/haptoglobin complexes are rapidly cleared by the macrophage CD163 scavenger receptor expressed on the surface of liver Kupfer cells through an endocytic lysosomal degradation pathway. The chain is Haptoglobin (Hp) from Mus musculus (Mouse).